Consider the following 1085-residue polypeptide: Error-prone DNA polymerase (1085 aa).

The protein belongs to the DNA polymerase type-C family. DnaE2 subfamily.

It is found in the cytoplasm. It carries out the reaction DNA(n) + a 2'-deoxyribonucleoside 5'-triphosphate = DNA(n+1) + diphosphate. Its function is as follows. DNA polymerase involved in damage-induced mutagenesis and translesion synthesis (TLS). It is not the major replicative DNA polymerase. The protein is Error-prone DNA polymerase of Symbiobacterium thermophilum (strain DSM 24528 / JCM 14929 / IAM 14863 / T).